The following is a 75-amino-acid chain: Small ribosomal subunit protein bS21A (75 aa).

It belongs to the bacterial ribosomal protein bS21 family.

The chain is Small ribosomal subunit protein bS21A (rpsU1) from Agrobacterium fabrum (strain C58 / ATCC 33970) (Agrobacterium tumefaciens (strain C58)).